The chain runs to 292 residues: Homoserine kinase (292 aa).

81-91 is a binding site for ATP; it reads RPRSGLGSSGA.

This sequence belongs to the GHMP kinase family. Homoserine kinase subfamily.

It localises to the cytoplasm. The catalysed reaction is L-homoserine + ATP = O-phospho-L-homoserine + ADP + H(+). Its pathway is amino-acid biosynthesis; L-threonine biosynthesis; L-threonine from L-aspartate: step 4/5. Functionally, catalyzes the ATP-dependent phosphorylation of L-homoserine to L-homoserine phosphate. The polypeptide is Homoserine kinase (Thermococcus gammatolerans (strain DSM 15229 / JCM 11827 / EJ3)).